The primary structure comprises 232 residues: Phosphate-specific transport system accessory protein PhoU homolog 1 (232 aa).

This sequence belongs to the PhoU family. Homodimer.

The protein resides in the cytoplasm. In terms of biological role, plays a role in the regulation of phosphate uptake. In Thermotoga maritima (strain ATCC 43589 / DSM 3109 / JCM 10099 / NBRC 100826 / MSB8), this protein is Phosphate-specific transport system accessory protein PhoU homolog 1 (phoU1).